Reading from the N-terminus, the 433-residue chain is tRNA(Ile)-lysidine synthase (433 aa).

37 to 42 (SGGKDS) serves as a coordination point for ATP.

It belongs to the tRNA(Ile)-lysidine synthase family.

Its subcellular location is the cytoplasm. It catalyses the reaction cytidine(34) in tRNA(Ile2) + L-lysine + ATP = lysidine(34) in tRNA(Ile2) + AMP + diphosphate + H(+). Functionally, ligates lysine onto the cytidine present at position 34 of the AUA codon-specific tRNA(Ile) that contains the anticodon CAU, in an ATP-dependent manner. Cytidine is converted to lysidine, thus changing the amino acid specificity of the tRNA from methionine to isoleucine. The protein is tRNA(Ile)-lysidine synthase of Leptospira interrogans serogroup Icterohaemorrhagiae serovar copenhageni (strain Fiocruz L1-130).